Reading from the N-terminus, the 360-residue chain is DNA replication and repair protein RecF (360 aa).

Position 30-37 (30-37) interacts with ATP; the sequence is GHNGSGKT.

Belongs to the RecF family.

It localises to the cytoplasm. The RecF protein is involved in DNA metabolism; it is required for DNA replication and normal SOS inducibility. RecF binds preferentially to single-stranded, linear DNA. It also seems to bind ATP. The polypeptide is DNA replication and repair protein RecF (Shewanella denitrificans (strain OS217 / ATCC BAA-1090 / DSM 15013)).